Consider the following 361-residue polypeptide: Phospho-N-acetylmuramoyl-pentapeptide-transferase (361 aa).

Helical transmembrane passes span 26–46, 71–91, 97–117, 134–154, 168–188, 200–220, 236–256, 264–284, 290–310, and 338–358; these read AGGA…CIIE, TPTM…FLWA, FILW…CDDY, IFGQ…FPSN, GFFI…IVGS, GLAI…AYFA, GAGE…GFLW, IFMG…VSLF, VLVL…IQIF, and KVTV…FASL.

Belongs to the glycosyltransferase 4 family. MraY subfamily. Mg(2+) serves as cofactor.

It is found in the cell membrane. The catalysed reaction is UDP-N-acetyl-alpha-D-muramoyl-L-alanyl-gamma-D-glutamyl-meso-2,6-diaminopimeloyl-D-alanyl-D-alanine + di-trans,octa-cis-undecaprenyl phosphate = di-trans,octa-cis-undecaprenyl diphospho-N-acetyl-alpha-D-muramoyl-L-alanyl-D-glutamyl-meso-2,6-diaminopimeloyl-D-alanyl-D-alanine + UMP. It functions in the pathway cell wall biogenesis; peptidoglycan biosynthesis. Functionally, catalyzes the initial step of the lipid cycle reactions in the biosynthesis of the cell wall peptidoglycan: transfers peptidoglycan precursor phospho-MurNAc-pentapeptide from UDP-MurNAc-pentapeptide onto the lipid carrier undecaprenyl phosphate, yielding undecaprenyl-pyrophosphoryl-MurNAc-pentapeptide, known as lipid I. This Endomicrobium trichonymphae protein is Phospho-N-acetylmuramoyl-pentapeptide-transferase.